Here is a 212-residue protein sequence, read N- to C-terminus: Probable nicotinate-nucleotide adenylyltransferase (212 aa).

This sequence belongs to the NadD family.

It catalyses the reaction nicotinate beta-D-ribonucleotide + ATP + H(+) = deamido-NAD(+) + diphosphate. The protein operates within cofactor biosynthesis; NAD(+) biosynthesis; deamido-NAD(+) from nicotinate D-ribonucleotide: step 1/1. Its function is as follows. Catalyzes the reversible adenylation of nicotinate mononucleotide (NaMN) to nicotinic acid adenine dinucleotide (NaAD). This chain is Probable nicotinate-nucleotide adenylyltransferase, found in Shewanella sp. (strain ANA-3).